Reading from the N-terminus, the 208-residue chain is Dephospho-CoA kinase (208 aa).

The DPCK domain occupies 3 to 208 (EIGLTGGIGS…ALSAAGVTQA (206 aa)). 11 to 16 (GSGKTR) is a binding site for ATP.

It belongs to the CoaE family.

It is found in the cytoplasm. The enzyme catalyses 3'-dephospho-CoA + ATP = ADP + CoA + H(+). Its pathway is cofactor biosynthesis; coenzyme A biosynthesis; CoA from (R)-pantothenate: step 5/5. Functionally, catalyzes the phosphorylation of the 3'-hydroxyl group of dephosphocoenzyme A to form coenzyme A. The sequence is that of Dephospho-CoA kinase from Cupriavidus pinatubonensis (strain JMP 134 / LMG 1197) (Cupriavidus necator (strain JMP 134)).